We begin with the raw amino-acid sequence, 498 residues long: ATP synthase subunit beta, chloroplastic (498 aa).

An ATP-binding site is contributed by 172-179; the sequence is GGAGVGKT.

It belongs to the ATPase alpha/beta chains family. In terms of assembly, F-type ATPases have 2 components, CF(1) - the catalytic core - and CF(0) - the membrane proton channel. CF(1) has five subunits: alpha(3), beta(3), gamma(1), delta(1), epsilon(1). CF(0) has four main subunits: a(1), b(1), b'(1) and c(9-12).

The protein resides in the plastid. It is found in the chloroplast thylakoid membrane. It carries out the reaction ATP + H2O + 4 H(+)(in) = ADP + phosphate + 5 H(+)(out). Its function is as follows. Produces ATP from ADP in the presence of a proton gradient across the membrane. The catalytic sites are hosted primarily by the beta subunits. This is ATP synthase subunit beta, chloroplastic from Triticum aestivum (Wheat).